We begin with the raw amino-acid sequence, 560 residues long: Glutamine--tRNA ligase (560 aa).

Residues P36–H46 carry the 'HIGH' region motif. Residues E37–N39 and H43–A49 contribute to the ATP site. D69 and Y214 together coordinate L-glutamine. R263–L264 serves as a coordination point for ATP. The 'KMSKS' region signature appears at L270–R274.

Belongs to the class-I aminoacyl-tRNA synthetase family. Monomer.

The protein resides in the cytoplasm. The enzyme catalyses tRNA(Gln) + L-glutamine + ATP = L-glutaminyl-tRNA(Gln) + AMP + diphosphate. The polypeptide is Glutamine--tRNA ligase (Chromobacterium violaceum (strain ATCC 12472 / DSM 30191 / JCM 1249 / CCUG 213 / NBRC 12614 / NCIMB 9131 / NCTC 9757 / MK)).